Here is a 586-residue protein sequence, read N- to C-terminus: A-type ATP synthase subunit A (586 aa).

ATP is bound at residue 232 to 239 (GPFGSGKT).

Belongs to the ATPase alpha/beta chains family. Has multiple subunits with at least A(3), B(3), C, D, E, F, H, I and proteolipid K(x).

The protein resides in the cell membrane. It catalyses the reaction ATP + H2O + 4 H(+)(in) = ADP + phosphate + 5 H(+)(out). Functionally, component of the A-type ATP synthase that produces ATP from ADP in the presence of a proton gradient across the membrane. The A chain is the catalytic subunit. The polypeptide is A-type ATP synthase subunit A (Methanococcus maripaludis (strain C5 / ATCC BAA-1333)).